A 432-amino-acid polypeptide reads, in one-letter code: Cyclic GMP-AMP synthase (432 aa).

110-115 contacts GTP; that stretch reads QGSFQY. Positions 129 and 131 each coordinate Mg(2+). Residue Arg180 coordinates ATP. Residue Asp191 participates in Mg(2+) binding. Ser255 is a binding site for ATP. GTP-binding residues include Lys283, Ser297, and Asp344. Gly432 is covalently cross-linked (Glycyl cysteine dithioester (Gly-Cys) (interchain with C-13 in Cap2)). Gly432 is covalently cross-linked (Glycyl cysteine dithioester (Gly-Cys) (interchain with C-493 in Cap2)). A Glycyl cysteine dithioester (Gly-Cys) (interchain with C-513 in Cap2) cross-link involves residue Gly432. Residue Gly432 forms a Glycyl lysine isopeptide (Gly-Lys) (interchain with K-? in acceptor proteins) linkage.

The protein belongs to the CD-NTase family. A02 subfamily. As to quaternary structure, a Cap2 dimer is bound on either side by a DncV monomer. Mg(2+) is required as a cofactor. In bacteria expressing capV-dncV-cap2-cap3, this protein is conjugated to about 130 cellular proteins by Cap2, most of which are involved in metabolism; more conjugated protein is found in the absence of Cap3. Most conjugation occurs via an isopeptide bond with the epsilon-amine of Lys on the target protein, but Cys-conjugation also occurs, including to Cap2. Conjugation or deconjugation from cellular proteins does not change the DncV activity in vitro, but does so in vivo during infection. In terms of processing, (Microbial infection) During phage T4 infection is conjugated to at least 2 T4 proteins (fibritin (wac) and dexA.2).

The enzyme catalyses GTP + ATP = 3',3'-cGAMP + 2 diphosphate. Its activity is regulated as follows. Primed for activation by Cap2 which conjugates it to cellular proteins. cGAMP production is induced in phage T4 infected cells in a manner that requires Cap2 and Cap3, as well as a C-terminal Ala or Gly residue in this protein. Its function is as follows. Cyclic nucleotide synthase (second messenger synthase) of a CBASS antivirus system. CBASS (cyclic oligonucleotide-based antiphage signaling system) provides immunity against bacteriophages. The CD-NTase protein (DncV, this protein) synthesizes cyclic nucleotides in response to infection; these serve as specific second messenger signals. The signals activate a diverse range of effectors, leading to bacterial cell death and thus abortive phage infection. A type II-A(GA) CBASS system. Functionally, catalyzes the synthesis of 3',3'-cyclic GMP-AMP (cGAMP) from GTP and ATP, a second messenger in cell signal transduction. Its product controls the activity of cGAMP-activated phospholipase CapV, a patatin-like lipase that is a direct cGAMP receptor encoded in the dncV operon. Protects E.coli against phage infection. When capV and dncV are introduced in E.coli MG1655 there is 1000-fold protection against phage P1; protection against other phage (T2, T4, T5, T6 and lambda-vir) requires the 2 subsequent genes (cap2 and cap3). In another paper the capV-dncV-cap2-cap3 operon gives 10(4)-10(5)-fold protection against phages lambda, T2, T4 and T6, about 1000-fold protection against P1 and 10-fold protection against T5. This Escherichia coli (strain TW11681) protein is Cyclic GMP-AMP synthase.